A 149-amino-acid chain; its full sequence is Immunoglobulin kappa chain variable 6-17 (149 aa).

Positions 1 to 29 (MHHTSMGIKMESQIQVFVFVFLWLSGVDG) are cleaved as a signal peptide. Repeats lie at residues 26-35 (GVDGDIVMTQ) and 38-47 (GVDGDIVMTQ). The tract at residues 42–64 (DIVMTQSHKFMSTSVGDRVSITC) is framework-1. The interval 65–75 (KASQDVSTTVA) is complementarity-determining-1. The framework-2 stretch occupies residues 76 to 90 (WYQQKPGQSPKLLIY). The complementarity-determining-2 stretch occupies residues 91–97 (SASYRYT). A framework-3 region spans residues 98–129 (GVPDRFTGSGSGTDFTFTISSVQAEDLAVYYC). Residues 130–138 (QQHYSTPPT) are complementarity-determining-3. Residues 139-148 (FGGGTKLEIK) form a framework-4 region.

In Mus musculus (Mouse), this protein is Immunoglobulin kappa chain variable 6-17.